A 340-amino-acid polypeptide reads, in one-letter code: Selenide, water dikinase (340 aa).

The active site involves selenocysteine 17. A non-standard amino acid (selenocysteine) is located at residue selenocysteine 17. Residues lysine 20 and asparagine 45–glutamate 47 each bind ATP. Aspartate 48 serves as a coordination point for Mg(2+). Residues aspartate 65, aspartate 88, and glycine 136–threonine 138 each bind ATP. Residue aspartate 88 participates in Mg(2+) binding. Aspartate 224 contributes to the Mg(2+) binding site.

Belongs to the selenophosphate synthase 1 family. Class I subfamily. In terms of assembly, homodimer. Requires Mg(2+) as cofactor.

The catalysed reaction is hydrogenselenide + ATP + H2O = selenophosphate + AMP + phosphate + 2 H(+). Synthesizes selenophosphate from selenide and ATP. This Campylobacter jejuni subsp. jejuni serotype O:2 (strain ATCC 700819 / NCTC 11168) protein is Selenide, water dikinase.